A 694-amino-acid chain; its full sequence is MSGGRFDFDDGGAYCGGWEGGKAHGHGLCTGPKGQGEYSGSWNFGFEVAGVYTWPSGNTFEGYWSQGKRHGLGIETKGRWLYKGEWTHGFKGRYGTRQSTSSGAKYEGTWNNGLQDGYGTETYADGGTYQGQFTNGMRHGYGVRQSVPYGMAVVVRSPLRTSLSSLRSEHSNGTVAPDSPASPAADGPALPSPAIPRGGFALSLLANAEAARAPKGGGLFPRGALLGKLRRAESRTSVGSQRSRVSFLKSDLSSGASDAASTASLGEGAEGADDAAPFEADIDATTTETYMGEWKNDKRSGFGVSERSSGLRYEGEWLDNLRHGYGCTTLPDGHREEGKYRHNVLVKGTKRRVLPLKSNKVRQKVEHSVEGAQRAAAIARQKAEIAVSRTSHARAKAEAAEQAALAANQESNIARSLARELAPDFYQPGPEYQKRRLLQEILEHSESLLEPPDRGAAGLPQPPRESPQLHERETPRPEGGPPSPAGTPPQPKRPRPGASKDGLLGPGAWNGEPSGGSGGEGSRPATPAAAGAGRRSPARPASEHMAIEALQAPPAPSREPEVALYRGYHSYAVRTAPPAPPPFEDDPQPEAADPDSAPASPATAPGQAPALGNPEPAPESPAKLEPKPIVPKAKARKTEARGLSKTGAKKKPRKEAAQAAEAEVEVEEVPNTVLICMVILLNIGLAILFVHLLT.

The Cytoplasmic segment spans residues 1–672 (MSGGRFDFDD…EVEVEEVPNT (672 aa)). MORN repeat units lie at residues 14-36 (YCGG…KGQG), 38-59 (YSGS…SGNT), 60-79 (FEGY…TKGR), 82-104 (YKGE…SSGA), 106-128 (YEGT…DGGT), and 129-151 (YQGQ…PYGM). Phosphoserine occurs at positions 162 and 165. Disordered stretches follow at residues 164 to 192 (SSLR…ALPS) and 231 to 278 (RAES…AAPF). Low complexity predominate over residues 176-189 (APDSPASPAADGPA). Residues 235 to 244 (RTSVGSQRSR) are compositionally biased toward polar residues. A compositionally biased stretch (low complexity) spans 250–267 (SDLSSGASDAASTASLGE). 2 MORN repeats span residues 290-312 (YMGE…SGLR) and 313-335 (YEGE…DGHR). A Bipartite nuclear localization signal motif is present at residues 350–364 (KRRVLPLKSNKVRQK). Phosphoserine occurs at positions 445, 447, and 466. Residues 448 to 663 (LLEPPDRGAA…KEAAQAAEAE (216 aa)) are disordered. The span at 467 to 476 (PQLHERETPR) shows a compositional bias: basic and acidic residues. Residue T474 is modified to Phosphothreonine. Over residues 478–491 (EGGPPSPAGTPPQP) the composition is skewed to pro residues. S483 carries the phosphoserine modification. T487 is subject to Phosphothreonine. Residues 492-496 (KRPRP) carry the Nuclear localization signal motif. The segment covering 522-540 (SRPATPAAAGAGRRSPARP) has biased composition (low complexity). Residues S536, S542, S596, and S600 each carry the phosphoserine modification. Low complexity predominate over residues 589-610 (PEAADPDSAPASPATAPGQAPA). Residues 673–693 (VLICMVILLNIGLAILFVHLL) form a helical; Anchor for type IV membrane protein membrane-spanning segment.

Belongs to the junctophilin family. Interacts with TRPC3. Interacts with BAG5 and HSPA8; the interaction with HSPA8 is increased in the presence of BAG5. Junctophilin-2 N-terminal fragment: Interacts with MEF2C. In terms of processing, proteolytically cleaved by calpain in response to cardiac stress. The major cleavage site takes place at the C-terminus and leads to the release of the Junctophilin-2 N-terminal fragment chain (JP2NT). Phosphorylation on Ser-165, probably by PKC, affects RYR1-mediated calcium ion release, interaction with TRPC3, and skeletal muscle myotubule development.

The protein resides in the cell membrane. The protein localises to the sarcoplasmic reticulum membrane. It is found in the endoplasmic reticulum membrane. It localises to the nucleus. Functionally, membrane-binding protein that provides a structural bridge between the plasma membrane and the sarcoplasmic reticulum and is required for normal excitation-contraction coupling in cardiomyocytes. Provides a structural foundation for functional cross-talk between the cell surface and intracellular Ca(2+) release channels by maintaining the 12-15 nm gap between the sarcolemma and the sarcoplasmic reticulum membranes in the cardiac dyads. Necessary for proper intracellular Ca(2+) signaling in cardiac myocytes via its involvement in ryanodine receptor-mediated calcium ion release. Contributes to the construction of skeletal muscle triad junctions. Its function is as follows. Transcription repressor required to safeguard against the deleterious effects of cardiac stress. Generated following cleavage of the Junctophilin-2 chain by calpain in response to cardiac stress in cardiomyocytes. Following cleavage and release from the membrane, translocates to the nucleus, binds DNA and represses expression of genes implicated in cell growth and differentiation, hypertrophy, inflammation and fibrosis. Modifies the transcription profile and thereby attenuates pathological remodeling in response to cardiac stress. Probably acts by competing with MEF2 transcription factors and TATA-binding proteins. This Oryctolagus cuniculus (Rabbit) protein is Junctophilin-2 (JPH2).